The following is a 1126-amino-acid chain: Carbamoyl phosphate synthase large chain (1126 aa).

Residues 1–402 form a carboxyphosphate synthetic domain region; sequence MPKRTDIKSV…SLGKAMRSID (402 aa). Residues R129, R169, G175, G176, E208, I210, E215, G241, V242, H243, Q285, and E299 each contribute to the ATP site. Residues 133 to 328 enclose the ATP-grasp 1 domain; the sequence is KKVVEEAGAE…IAKIATKLAL (196 aa). Q285, E299, and N301 together coordinate Mg(2+). Residues Q285, E299, and N301 each coordinate Mn(2+). The segment at 403 to 551 is oligomerization domain; it reads KRHMGFNWDG…YYYSCYADET (149 aa). A carbamoyl phosphate synthetic domain region spans residues 552 to 962; it reads ELRPRDREAV…AFAKSQLAAY (411 aa). Positions 681–881 constitute an ATP-grasp 2 domain; that stretch reads GEVLKKADMN…LAKAAARIMV (201 aa). ATP-binding residues include R717, K765, L767, E772, G797, V798, H799, S800, Q840, and E852. Mg(2+)-binding residues include Q840, E852, and N854. 3 residues coordinate Mn(2+): Q840, E852, and N854. Residues 963-1126 form an allosteric domain region; it reads EGGLPTSGNV…TQLFELESRD (164 aa). In terms of domain architecture, MGS-like spans 964–1126; sequence GGLPTSGNVF…TQLFELESRD (163 aa).

This sequence belongs to the CarB family. In terms of assembly, composed of two chains; the small (or glutamine) chain promotes the hydrolysis of glutamine to ammonia, which is used by the large (or ammonia) chain to synthesize carbamoyl phosphate. Tetramer of heterodimers (alpha,beta)4. Mg(2+) is required as a cofactor. Mn(2+) serves as cofactor.

The catalysed reaction is hydrogencarbonate + L-glutamine + 2 ATP + H2O = carbamoyl phosphate + L-glutamate + 2 ADP + phosphate + 2 H(+). It carries out the reaction hydrogencarbonate + NH4(+) + 2 ATP = carbamoyl phosphate + 2 ADP + phosphate + 2 H(+). Its pathway is amino-acid biosynthesis; L-arginine biosynthesis; carbamoyl phosphate from bicarbonate: step 1/1. It participates in pyrimidine metabolism; UMP biosynthesis via de novo pathway; (S)-dihydroorotate from bicarbonate: step 1/3. Large subunit of the glutamine-dependent carbamoyl phosphate synthetase (CPSase). CPSase catalyzes the formation of carbamoyl phosphate from the ammonia moiety of glutamine, carbonate, and phosphate donated by ATP, constituting the first step of 2 biosynthetic pathways, one leading to arginine and/or urea and the other to pyrimidine nucleotides. The large subunit (synthetase) binds the substrates ammonia (free or transferred from glutamine from the small subunit), hydrogencarbonate and ATP and carries out an ATP-coupled ligase reaction, activating hydrogencarbonate by forming carboxy phosphate which reacts with ammonia to form carbamoyl phosphate. The protein is Carbamoyl phosphate synthase large chain of Bifidobacterium adolescentis (strain ATCC 15703 / DSM 20083 / NCTC 11814 / E194a).